The sequence spans 28 residues: Dermaseptin-2 (28 aa).

Glutamine 28 is modified (glutamine amide).

It belongs to the frog skin active peptide (FSAP) family. Dermaseptin subfamily. In terms of tissue distribution, expressed by the skin glands.

Its subcellular location is the secreted. Antimicrobial peptide with activity against the Gram-positive bacterium S.aureus, and the Gram-negative bacteria E.coli and P.aeruginosa. Probably acts by disturbing membrane functions with its amphipathic structure. Has an activity of stimulation of insulin release, which may protect the species from being eaten by predators by causing fatal hypoglycemia. Has hemolytic activity (60% hemolysis at 128 ug/ml). The chain is Dermaseptin-2 from Phyllomedusa tarsius (Brownbelly leaf frog).